The following is a 263-amino-acid chain: tRNA1(Val) (adenine(37)-N6)-methyltransferase (263 aa).

It belongs to the methyltransferase superfamily. tRNA (adenine-N(6)-)-methyltransferase family.

The protein localises to the cytoplasm. The catalysed reaction is adenosine(37) in tRNA1(Val) + S-adenosyl-L-methionine = N(6)-methyladenosine(37) in tRNA1(Val) + S-adenosyl-L-homocysteine + H(+). In terms of biological role, specifically methylates the adenine in position 37 of tRNA(1)(Val) (anticodon cmo5UAC). The sequence is that of tRNA1(Val) (adenine(37)-N6)-methyltransferase from Salmonella choleraesuis (strain SC-B67).